A 158-amino-acid chain; its full sequence is 2-C-methyl-D-erythritol 2,4-cyclodiphosphate synthase (158 aa).

D9 and H11 together coordinate a divalent metal cation. 4-CDP-2-C-methyl-D-erythritol 2-phosphate-binding positions include 9 to 11 (DVH) and 35 to 36 (HS). H43 contributes to the a divalent metal cation binding site. Residues 57–59 (DIG), 62–66 (FPDTD), 101–107 (AQAPKMA), 133–136 (TTTE), F140, and R143 contribute to the 4-CDP-2-C-methyl-D-erythritol 2-phosphate site.

It belongs to the IspF family. Homotrimer. It depends on a divalent metal cation as a cofactor.

The enzyme catalyses 4-CDP-2-C-methyl-D-erythritol 2-phosphate = 2-C-methyl-D-erythritol 2,4-cyclic diphosphate + CMP. It participates in isoprenoid biosynthesis; isopentenyl diphosphate biosynthesis via DXP pathway; isopentenyl diphosphate from 1-deoxy-D-xylulose 5-phosphate: step 4/6. Involved in the biosynthesis of isopentenyl diphosphate (IPP) and dimethylallyl diphosphate (DMAPP), two major building blocks of isoprenoid compounds. Catalyzes the conversion of 4-diphosphocytidyl-2-C-methyl-D-erythritol 2-phosphate (CDP-ME2P) to 2-C-methyl-D-erythritol 2,4-cyclodiphosphate (ME-CPP) with a corresponding release of cytidine 5-monophosphate (CMP). The protein is 2-C-methyl-D-erythritol 2,4-cyclodiphosphate synthase of Vibrio vulnificus (strain YJ016).